A 286-amino-acid polypeptide reads, in one-letter code: MEAGPSTASPGVSVSPAPALTAGEVQLLKVPQKRFYRQRAHANVFIDHELDYPKRPELMDWSTHYPAYFSQPNEDGTITQGEKKVEWADVGCGFGGLLMALAPLFPEKLMLGMEIRTSVTKYVTDRIAATRQAQSLLPADSVDTKPGGYQNVSVIKANSMKHMPNFFAKGQLEKIFFLFPDPHFKNRKHKARIITPALLAEYAYVLRPGGILYTVTDVKDLHEWMAHHLHAHPLFEYIPTETLSDDPILEAARTATEEGQKVERNKGDKWVACFRRKEDPKEEDED.

Residues Gly91, 114–115 (EI), 158–159 (NS), and Leu178 each bind S-adenosyl-L-methionine. Asp181 is an active-site residue. S-adenosyl-L-methionine is bound at residue 256–258 (TEE).

It belongs to the class I-like SAM-binding methyltransferase superfamily. TrmB family. Forms a complex with TRM82.

It is found in the nucleus. It catalyses the reaction guanosine(46) in tRNA + S-adenosyl-L-methionine = N(7)-methylguanosine(46) in tRNA + S-adenosyl-L-homocysteine. The protein operates within tRNA modification; N(7)-methylguanine-tRNA biosynthesis. In terms of biological role, catalyzes the formation of N(7)-methylguanine at position 46 (m7G46) in tRNA. This Cryptococcus neoformans var. neoformans serotype D (strain B-3501A) (Filobasidiella neoformans) protein is tRNA (guanine-N(7)-)-methyltransferase.